A 983-amino-acid chain; its full sequence is Receptor-like protein 19 (983 aa).

The N-terminal stretch at 1 to 25 (MMKGYITLSFLIILIFNFLDEFAAS) is a signal peptide. Residues 26-937 (TRHLCDPDQS…EEDEEEVISW (912 aa)) lie on the Extracellular side of the membrane. N-linked (GlcNAc...) asparagine glycans are attached at residues asparagine 66 and asparagine 102. 31 LRR repeats span residues 82 to 108 (FGDV…LFRL), 111 to 135 (LRFL…LETL), 136 to 159 (SNLT…IGNL), 161 to 183 (HLIF…LGYL), 184 to 207 (SHLT…IGNL), 209 to 231 (YLTT…LGSL), 232 to 255 (FHLT…LGNL), 256 to 281 (SHLT…NLSC), 283 to 302 (TSFI…SFGN), 303 to 327 (LNQL…LLNL), 328 to 351 (RKLS…MSSL), 353 to 375 (NLKL…LFNI), 376 to 399 (PSLK…NISS), 401 to 424 (SNLT…ISKL), 425 to 448 (VNLK…IFSH), 450 to 474 (KSIE…ILSS), 475 to 498 (FKLL…SLSN), 501 to 524 (LVLI…LRSQ), 525 to 548 (ELML…LWML), 550 to 571 (VLNY…TKLG), 578 to 602 (PPAM…ICEL), 603 to 628 (PYLS…NIQS), 629 to 652 (PYLQ…IFES), 654 to 674 (ISLD…LSHI), 675 to 700 (SSLG…SLQE), 702 to 720 (QVLV…KTQF), 721 to 744 (SKLR…FFVN), 793 to 817 (LKVF…IGLL), 818 to 840 (KELH…SMGN), 841 to 865 (LMAL…LGKL), and 867 to 890 (YLAY…QFQT). N-linked (GlcNAc...) asparagine glycosylation is found at asparagine 137, asparagine 158, asparagine 171, asparagine 190, asparagine 195, and asparagine 206. Asparagine 254 and asparagine 278 each carry an N-linked (GlcNAc...) asparagine glycan. Asparagine 347 carries an N-linked (GlcNAc...) asparagine glycan. 3 N-linked (GlcNAc...) asparagine glycosylation sites follow: asparagine 389, asparagine 396, and asparagine 402. Asparagine 456, asparagine 461, asparagine 492, and asparagine 498 each carry an N-linked (GlcNAc...) asparagine glycan. 4 N-linked (GlcNAc...) asparagine glycosylation sites follow: asparagine 555, asparagine 558, asparagine 590, and asparagine 616. N-linked (GlcNAc...) asparagine glycans are attached at residues asparagine 734 and asparagine 744. A glycan (N-linked (GlcNAc...) asparagine) is linked at asparagine 824. The N-linked (GlcNAc...) asparagine glycan is linked to asparagine 872. The chain crosses the membrane as a helical span at residues 938–958 (IAAVIGFILGTALGLTFGCIL). At 959–983 (FSYKPDWFKNPFVRDKRRNIGTITH) the chain is on the cytoplasmic side.

Belongs to the RLP family.

It is found in the cell membrane. This chain is Receptor-like protein 19, found in Arabidopsis thaliana (Mouse-ear cress).